Reading from the N-terminus, the 463-residue chain is Protein translocase subunit SecY (463 aa).

Topologically, residues 1 to 20 (MGFMDFLAKMGENLPAVSKP) are cytoplasmic. A helical transmembrane segment spans residues 21–47 (KDKPTLTRKLLWTFIGLIVYLLMASIP). Residues 48-60 (LYGVTSSNSFLSN) lie on the Extracellular side of the membrane. The segment at residues 61 to 68 (FLAQQIIF) is an intramembrane region (helical). Residues 61–89 (FLAQQIIFASSQGTLAQLGIGPVITSGLI) traverse the membrane as a discontinuously helical segment. The stretch at 69–80 (ASSQGTLAQLGI) is an intramembrane region. Residues 81 to 89 (GPVITSGLI) constitute an intramembrane region (helical). At 90-110 (MQILVGSKLINVDLTTQEGKS) the chain is on the cytoplasmic side. A helical transmembrane segment spans residues 111 to 134 (KFTQAEKALALIFIIVESSLFGYV). Residues 135 to 142 (FTRATSNI) are Extracellular-facing. The chain crosses the membrane as a helical span at residues 143–167 (LLPIIVVVQLIIASYIILLLDEMIQ). Over 168–174 (KGWGLGS) the chain is Cytoplasmic. A helical membrane pass occupies residues 175–193 (GVSLFIMAGIMKVIFWNMF). Residues 194-236 (GIVSVQSQNLPVGFFPLLVSYITSGRNLQEIVLNTSSTTPYQP) are Extracellular-facing. Residues 237–258 (DLIGLIATVGLTILIVYLVNTN) traverse the membrane as a helical segment. Over 259-283 (IYIPVTTQRLRGIRTTVPLNFLYVS) the chain is Cytoplasmic. The chain crosses the membrane as a helical span at residues 284 to 305 (SIPVIFVSVLGADIQLFASLAN). The Extracellular segment spans residues 306–341 (SISNSASGILTDIANAFFFPPQGVPHSVYALVVDPV). The chain crosses the membrane as a helical span at residues 342–361 (GAAIYAAVFIVLSIVFGMLW). Residues 362-404 (IDVAGLDPKTQAEQMIRSGIEIPGMRTNPRIIEGILSKYIYAL) are Cytoplasmic-facing. A helical membrane pass occupies residues 405-423 (GFFSSLIVGLIAVVATFLG). Residues 424 to 426 (TYG) are Extracellular-facing. A helical transmembrane segment spans residues 427-441 (TGVGLLLAITIAMQY). Over 442–463 (YNLLAYERTLEMYPLLKRIVGE) the chain is Cytoplasmic.

Belongs to the SecY/SEC61-alpha family. Component of the Sec protein translocase complex. Heterotrimer consisting of alpha (SecY), beta (SecG) and gamma (SecE) subunits. The heterotrimers can form oligomers, although 1 heterotrimer is thought to be able to translocate proteins. Interacts with the ribosome. May interact with SecDF, and other proteins may be involved.

It localises to the cell membrane. In terms of biological role, the central subunit of the protein translocation channel SecYEG. Consists of two halves formed by TMs 1-5 and 6-10. These two domains form a lateral gate at the front which open onto the bilayer between TMs 2 and 7, and are clamped together by SecE at the back. The channel is closed by both a pore ring composed of hydrophobic SecY resides and a short helix (helix 2A) on the extracellular side of the membrane which forms a plug. The plug probably moves laterally to allow the channel to open. The ring and the pore may move independently. This Sulfolobus acidocaldarius (strain ATCC 33909 / DSM 639 / JCM 8929 / NBRC 15157 / NCIMB 11770) protein is Protein translocase subunit SecY.